The chain runs to 392 residues: uncharacterized protein (392 aa).

A J domain is found at 7–76 (TEYYDLLGIS…RSQYDQFGKE (70 aa)). A Phosphoserine modification is found at Ser-108.

This is an uncharacterized protein from Schizosaccharomyces pombe (strain 972 / ATCC 24843) (Fission yeast).